We begin with the raw amino-acid sequence, 197 residues long: dITP/XTP pyrophosphatase (197 aa).

8-13 (TGNPGK) provides a ligand contact to substrate. Mg(2+) is bound by residues glutamate 40 and aspartate 69. Aspartate 69 functions as the Proton acceptor in the catalytic mechanism. Substrate contacts are provided by residues serine 70, 154-157 (FGYD), lysine 177, and 182-183 (HR).

Belongs to the HAM1 NTPase family. In terms of assembly, homodimer. Mg(2+) serves as cofactor.

It carries out the reaction XTP + H2O = XMP + diphosphate + H(+). It catalyses the reaction dITP + H2O = dIMP + diphosphate + H(+). The catalysed reaction is ITP + H2O = IMP + diphosphate + H(+). Pyrophosphatase that catalyzes the hydrolysis of nucleoside triphosphates to their monophosphate derivatives, with a high preference for the non-canonical purine nucleotides XTP (xanthosine triphosphate), dITP (deoxyinosine triphosphate) and ITP. Seems to function as a house-cleaning enzyme that removes non-canonical purine nucleotides from the nucleotide pool, thus preventing their incorporation into DNA/RNA and avoiding chromosomal lesions. This Yersinia pestis protein is dITP/XTP pyrophosphatase.